The sequence spans 987 residues: MAMDFIRIRGARTHNLKNIDLDLPRDKLIVITGLSGSGKSSLAFDTIYAEGQRRYVESLSAYARQFLSVMEKPDLDHIEGLSPAISIEQKSTSHNPRSTVGTITEIYDYLRLLYARVGQPRCPDHGFPLEAQTVSQMVDHMLAQDQEQRYMLLAPVIRDRKGEHAQVFEQLRAQGFVRVRVDGELYEIDAVPPLALRQKHTIEAVIDRFRPREDIKQRLAESFETALKLGEGMVAVQSLDDPAAAPHLFSSKYSCPVCDYSLPELEPRLFSFNAPVGACPSCDGLGVAEFFDPDRVVVHPELSLSAGAVRGWDRRNAYYFQLIASLAKHYKFDVDAVWNTLPAKVRQAVLFGSGDEVISFTYFTDAGGRTTRKHRFEGILPNLERRYRETESPAVREELTKYVSQQPCPACNGTRLNRAARNVFVADRPLPELVVLPVNEALSFFRGLSLPGWRGEIAAKIVKEIGERLGFLVDVGLDYLTLERKADTLSGGEAQRIRLASQIGAGLVGVMYVLDEPSIGLHQRDNERLLGTLTRLRDLGNTVIVVEHDEDAIRLADHVLDIGPGAGVHGGEICAQGTLDDILKSPRSLTGQYLSGKRRIEIPKQRHKPNPKMMLHLRGATGNNLKNVDLDIPAGLLTCITGVSGSGKSTLINDTLFTLAANEINGASHTVAPHREVENLDLFDKVVDIDQSPIGRTPRSNPATYTGMFTPLRELFAQVPEARARGYSPGRFSFNVRGGRCEACQGDGMIKVEMHFLPDVYVPCDVCHGKRYNRETLEIRYKGFNISDVLQMTVEDALRLFEPVPSIARKLETLVDVGLSYIKLGQSATTLSGGEAQRVKLSKELSRRDTGRTLYILDEPTTGLHFHDIEALLGVLHKLRDEGNTVVVIEHNLDVIKTADWIVDLGPEGGHRGGTILVSGTPEEVAAHKASYTGQFLAKMLPSVKARETRPAAMANKPDARPPRKVKPEKVAKAAKSATKKTAKKAS.

33 to 40 (GLSGSGKS) contributes to the ATP binding site. The segment at 255 to 282 (CPVCDYSLPELEPRLFSFNAPVGACPSC) adopts a C4-type zinc-finger fold. ABC transporter domains follow at residues 312–589 (WDRR…PRSL) and 609–938 (PNPK…QFLA). An ATP-binding site is contributed by 642–649 (GVSGSGKS). The segment at 741–767 (CEACQGDGMIKVEMHFLPDVYVPCDVC) adopts a C4-type zinc-finger fold. Residues 948 to 987 (ETRPAAMANKPDARPPRKVKPEKVAKAAKSATKKTAKKAS) are disordered. The span at 958-972 (PDARPPRKVKPEKVA) shows a compositional bias: basic and acidic residues. Positions 978 to 987 (ATKKTAKKAS) are enriched in basic residues.

The protein belongs to the ABC transporter superfamily. UvrA family. As to quaternary structure, forms a heterotetramer with UvrB during the search for lesions.

It is found in the cytoplasm. The UvrABC repair system catalyzes the recognition and processing of DNA lesions. UvrA is an ATPase and a DNA-binding protein. A damage recognition complex composed of 2 UvrA and 2 UvrB subunits scans DNA for abnormalities. When the presence of a lesion has been verified by UvrB, the UvrA molecules dissociate. The sequence is that of UvrABC system protein A from Xanthomonas axonopodis pv. citri (strain 306).